A 394-amino-acid chain; its full sequence is Metallophosphoesterase 1 (394 aa).

Residues 27–47 traverse the membrane as a helical segment; the sequence is TVVVISVLLFCEYFIYYLVLF. Positions 74, 116, 154, 247, 301, and 303 each coordinate a divalent metal cation. A helical transmembrane segment spans residues 354–374; sequence TVLTTYCAAAAFLLVLILAHF.

This sequence belongs to the metallophosphoesterase superfamily. MPPE1 family. Interacts with GPI-anchor proteins (via the GPI portion). Interacts with TMED10. Requires Mn(2+) as cofactor.

Its subcellular location is the endoplasmic reticulum-Golgi intermediate compartment membrane. In terms of biological role, metallophosphoesterase that catalyzes the removal of a side-chain ethanolamine-phosphate (EtNP) from the second mannose of the GPI-anchor protein intermediate. Participates in the glycan remodeling steps of GPI-anchor maturation to allow an efficient transport of GPI-anchor proteins from the endoplasmic reticulum to the Golgi. This is Metallophosphoesterase 1 from Rattus norvegicus (Rat).